Reading from the N-terminus, the 1078-residue chain is DNA-directed RNA polymerase subunit beta (1078 aa).

This sequence belongs to the RNA polymerase beta chain family. The minimal PEP RNA polymerase found in etioplasts (PEP-B) is composed of four subunits: alpha, beta, beta', and beta''. Following differentiation into chloroplasts the PEP-A RNA polymerase in this organism has been shown to be composed of at least 13 subunits, including the PEP-B subunits. When a (nuclear-encoded) sigma factor is associated with the core the holoenzyme is formed, which can initiate transcription.

It is found in the plastid. The protein localises to the chloroplast. It catalyses the reaction RNA(n) + a ribonucleoside 5'-triphosphate = RNA(n+1) + diphosphate. In terms of biological role, DNA-dependent RNA polymerase catalyzes the transcription of DNA into RNA using the four ribonucleoside triphosphates as substrates. The polypeptide is DNA-directed RNA polymerase subunit beta (rpoB) (Sinapis alba (White mustard)).